The chain runs to 846 residues: uncharacterized protein (846 aa).

6 WD repeats span residues 88–129 (TKHI…LLYD), 132–172 (EHSR…STIT), 175–215 (GNSE…LPFL), 219–258 (AHNG…KKSL), 262–309 (NNVS…IPYR), and 313–348 (CHDS…NAFN). The segment at 541 to 560 (PREASTPSESSNSSIESEDN) is disordered. Low complexity predominate over residues 544–555 (ASTPSESSNSSI). Residues 624–663 (FHRSSVTSASIKSREAVLSAGNSSRRASIFLDQLSLHGDT) form a WD 7 repeat.

This is an uncharacterized protein from Schizosaccharomyces pombe (strain 972 / ATCC 24843) (Fission yeast).